The following is an 840-amino-acid chain: Leucine--tRNA ligase (840 aa).

Residues 44 to 55 (PYPSANGLHVGH) carry the 'HIGH' region motif. The short motif at 617-621 (KMSKS) is the 'KMSKS' region element. Residue Lys620 coordinates ATP.

This sequence belongs to the class-I aminoacyl-tRNA synthetase family.

The protein resides in the cytoplasm. It carries out the reaction tRNA(Leu) + L-leucine + ATP = L-leucyl-tRNA(Leu) + AMP + diphosphate. This chain is Leucine--tRNA ligase, found in Borreliella afzelii (strain PKo) (Borrelia afzelii).